The primary structure comprises 301 residues: NAD kinase (301 aa).

D73 (proton acceptor) is an active-site residue. Residues 73–74 (DG), 160–161 (NE), R188, D190, A198, 201–206 (TAYNIS), A225, and Q257 each bind NAD(+).

The protein belongs to the NAD kinase family. The cofactor is a divalent metal cation.

It localises to the cytoplasm. It catalyses the reaction NAD(+) + ATP = ADP + NADP(+) + H(+). In terms of biological role, involved in the regulation of the intracellular balance of NAD and NADP, and is a key enzyme in the biosynthesis of NADP. Catalyzes specifically the phosphorylation on 2'-hydroxyl of the adenosine moiety of NAD to yield NADP. The polypeptide is NAD kinase (Helicobacter hepaticus (strain ATCC 51449 / 3B1)).